We begin with the raw amino-acid sequence, 53 residues long: Tryptophan RNA-binding attenuator protein inhibitory protein (53 aa).

CXXCXGXG motif repeat units follow at residues 12–19 (CPKCERAG) and 26–33 (CPACSGKG).

In terms of assembly, homopentamer or homohexamer.

It is found in the cytoplasm. Functionally, by forming a complex with tryptophan-activated TRAP, and masking its RNA binding site, it inhibits TRAP's RNA binding ability, thereby abolishing TRAP regulation of gene expression, leading to antitermination and increased trp operon expression. AT acts by competing with messenger RNA for the RNA binding domain of TRAP. This Bacillus subtilis (strain 168) protein is Tryptophan RNA-binding attenuator protein inhibitory protein (rtpA).